A 546-amino-acid chain; its full sequence is Phosphatidylinositol 4-phosphate 5-kinase type-1 alpha (546 aa).

In terms of domain architecture, PIPK spans 65–433; the sequence is TSSALKGAIQ…RFQRFMCNTV (369 aa). A Glycyl lysine isopeptide (Lys-Gly) (interchain with G-Cter in ubiquitin) cross-link involves residue Lys87. The segment at 441 to 522 is disordered; sequence PSPTKKFRSG…PGPSFSPAVG (82 aa). Over residues 449 to 461 the composition is skewed to low complexity; the sequence is SGPSFSRRSGPSG. Over residues 462 to 471 the composition is skewed to polar residues; it reads NSCTPSQPTA. A compositionally biased stretch (basic and acidic residues) spans 473 to 493; it reads GEHKAQVTTKAEVEPDIHLGR.

In terms of assembly, interacts with RAC1. Interacts with TUT1. Forms a complex with CDH1/E-cadherin, CTNNB1/beta-catenin and CTNND1 at the plasma membrane upon calcium stimulation. Found in a ternary complex with IRS1 and DGKZ in the absence of insulin stimulation. Interacts with DGKZ. Interacts with PIP4K2C; the interaction inhibits PIP5K1A kinase activity.

It is found in the cell membrane. Its subcellular location is the cytoplasm. The protein localises to the nucleus. The protein resides in the nucleus speckle. It localises to the cell projection. It is found in the ruffle. Its subcellular location is the lamellipodium. It carries out the reaction a 1,2-diacyl-sn-glycero-3-phospho-(1D-myo-inositol 4-phosphate) + ATP = a 1,2-diacyl-sn-glycero-3-phospho-(1D-myo-inositol-4,5-bisphosphate) + ADP + H(+). It catalyses the reaction 1-octadecanoyl-2-(5Z,8Z,11Z,14Z)-eicosatetraenoyl-sn-glycero-3-phospho-1D-myo-inositol 4-phosphate + ATP = 1-octadecanoyl-2-(5Z,8Z,11Z,14Z)-eicosatetraenoyl-sn-glycero-3-phospho-1D-myo-inositol 4,5-bisphosphate + ADP + H(+). The enzyme catalyses 1,2-dihexadecanoyl-sn-glycero-3-phospho-(1D-myo-inositol-4-phosphate) + ATP = 1,2-dihexadecanoyl-sn-glycero-3-phospho-(1D-myo-inositol-4,5-bisphosphate) + ADP + H(+). The catalysed reaction is 1-octadecanoyl-2-(9Z)-octadecenoyl-sn-glycero-3-phospho-1D-myo-inositol 4-phosphate + ATP = 1-octadecanoyl-2-(9Z)-octadecenoyl-sn-glycero-3-phospho-1D-myo-inositol 4,5-bisphosphate + ADP + H(+). It carries out the reaction 1-octadecanoyl-2-(9Z)-octadecenoyl-sn-glycero-3-phospho-1D-myo-inositol + ATP = 1-octadecanoyl-2-(9Z)-octadecenoyl-sn-glycero-3-phospho-1D-myo-inositol 5-phosphate + ADP + H(+). It catalyses the reaction 1-octadecanoyl-2-(9Z,12Z)-octadecadienoyl-sn-glycero-3-phospho-1D-myo-inositol + ATP = 1-octadecanoyl-2-(9Z,12Z)-octadecadienoyl-sn-glycero-3-phospho-1D-myo-inositol 5-phosphate + ADP + H(+). The enzyme catalyses 1-octadecanoyl-2-(5Z,8Z,11Z,14Z-eicosatetraenoyl)-sn-glycero-3-phospho-(1D-myo-inositol) + ATP = 1-octadecanoyl-2-(5Z,8Z,11Z,14Z)-eicosatetraenoyl-sn-glycero-3-phospho-1D-myo-inositol 5-phosphate + ADP + H(+). The catalysed reaction is 1,2-di-(9Z,12Z)-octadecadienoyl-sn-glycero-3-phospho-1D-myo-inositol + ATP = 1,2-di(9Z,12Z)-octadecadienoyl-sn-glycero-3-phospho-1D-myo-inositol 5-phosphate + ADP + H(+). Functionally, catalyzes the phosphorylation of phosphatidylinositol 4-phosphate (PtdIns(4)P/PI4P) to form phosphatidylinositol 4,5-bisphosphate (PtdIns(4,5)P2/PIP2), a lipid second messenger that regulates several cellular processes such as signal transduction, vesicle trafficking, actin cytoskeleton dynamics, cell adhesion, and cell motility. PtdIns(4,5)P2 can directly act as a second messenger or can be utilized as a precursor to generate other second messengers: inositol 1,4,5-trisphosphate (IP3), diacylglycerol (DAG) or phosphatidylinositol-3,4,5-trisphosphate (PtdIns(3,4,5)P3/PIP3). PIP5K1A-mediated phosphorylation of PtdIns(4)P is the predominant pathway for PtdIns(4,5)P2 synthesis. Can also use phosphatidylinositol (PtdIns) as substrate in vitro. Together with PIP5K1C, is required for phagocytosis, both enzymes regulating different types of actin remodeling at sequential steps. Promotes particle ingestion by activating the WAS GTPase-binding protein that induces Arp2/3 dependent actin polymerization at the nascent phagocytic cup. Together with PIP5K1B, is required, after stimulation by G-protein coupled receptors, for the synthesis of IP3 that will induce stable platelet adhesion. Recruited to the plasma membrane by the E-cadherin/beta-catenin complex where it provides the substrate PtdIns(4,5)P2 for the production of PtdIns(3,4,5)P3, IP3 and DAG, that will mobilize internal calcium and drive keratinocyte differentiation. Positively regulates insulin-induced translocation of SLC2A4 to the cell membrane in adipocytes. Together with PIP5K1C has a role during embryogenesis. Independently of its catalytic activity, is required for membrane ruffling formation, actin organization and focal adhesion formation during directional cell migration by controlling integrin-induced translocation of the small GTPase RAC1 to the plasma membrane. Also functions in the nucleus where it acts as an activator of TUT1 adenylyltransferase activity in nuclear speckles, thereby regulating mRNA polyadenylation of a select set of mRNAs. This is Phosphatidylinositol 4-phosphate 5-kinase type-1 alpha from Rattus norvegicus (Rat).